A 355-amino-acid polypeptide reads, in one-letter code: Green-sensitive opsin-1 (355 aa).

Residues 1-49 (MAAHADEPVFAARRYNEETTRESAFVYTNANNTRDPFEGPNYHIAPRWV) lie on the Extracellular side of the membrane. An N-linked (GlcNAc...) asparagine glycan is attached at N31. The chain crosses the membrane as a helical span at residues 50 to 74 (YNLASLWMIIVVIASIFTNSLVIVA). Residues 75 to 86 (TAKFKKLRHPLN) are Cytoplasmic-facing. Residues 87-112 (WILVNLAIADLGETVLASTISVFNQV) traverse the membrane as a helical segment. The Extracellular segment spans residues 113 to 126 (FGYFVLGHPMCIFE). C123 and C200 are joined by a disulfide. The helical transmembrane segment at 127–146 (GWTVSVCGITALWSLTIISW) threads the bilayer. At 147 to 165 (ERWVVVCKPFGNVKFDGKW) the chain is on the cytoplasmic side. The helical transmembrane segment at 166–189 (AAGGIIFAWTWAIIWCTPPIFGWS) threads the bilayer. At 190-215 (RYWPHGLKTSCGPDVFSGSEDPGVAS) the chain is on the extracellular side. The chain crosses the membrane as a helical span at residues 216–243 (YMVTLLLTCCILPLSVIIICYIFVWNAI). Residues 244-265 (HQVAQQQKDSESTQKAEKEVSR) lie on the Cytoplasmic side of the membrane. A helical membrane pass occupies residues 266–289 (MVVVMILAFILCWGPYASFATFSA). Residues 290–297 (LNPGYAWH) lie on the Extracellular side of the membrane. Residues 298–322 (PLAAALPAYFAKSATIYNPIIYVFM) traverse the membrane as a helical segment. The residue at position 309 (K309) is an N6-(retinylidene)lysine. The Cytoplasmic portion of the chain corresponds to 323–355 (NRQFRSCIMQLFGKKVEDASEVSGSTTEVSTAS).

This sequence belongs to the G-protein coupled receptor 1 family. Opsin subfamily. The color pigments are found in the cone photoreceptor cells.

The protein localises to the membrane. Its function is as follows. Visual pigments are the light-absorbing molecules that mediate vision. They consist of an apoprotein, opsin, covalently linked to cis-retinal. This chain is Green-sensitive opsin-1 (G103), found in Psalidodon fasciatus (Banded astyanax).